Reading from the N-terminus, the 184-residue chain is ATP-dependent protease subunit HslV (184 aa).

The active site involves T11. The Na(+) site is built by A165, C168, and T171.

It belongs to the peptidase T1B family. HslV subfamily. As to quaternary structure, a double ring-shaped homohexamer of HslV is capped on each side by a ring-shaped HslU homohexamer. The assembly of the HslU/HslV complex is dependent on binding of ATP.

The protein resides in the cytoplasm. The enzyme catalyses ATP-dependent cleavage of peptide bonds with broad specificity.. Its activity is regulated as follows. Allosterically activated by HslU binding. Protease subunit of a proteasome-like degradation complex believed to be a general protein degrading machinery. The chain is ATP-dependent protease subunit HslV from Zymomonas mobilis subsp. mobilis (strain ATCC 31821 / ZM4 / CP4).